Reading from the N-terminus, the 397-residue chain is Tryptophan synthase beta chain (397 aa).

K88 bears the N6-(pyridoxal phosphate)lysine mark.

Belongs to the TrpB family. Tetramer of two alpha and two beta chains. It depends on pyridoxal 5'-phosphate as a cofactor.

The enzyme catalyses (1S,2R)-1-C-(indol-3-yl)glycerol 3-phosphate + L-serine = D-glyceraldehyde 3-phosphate + L-tryptophan + H2O. It participates in amino-acid biosynthesis; L-tryptophan biosynthesis; L-tryptophan from chorismate: step 5/5. The beta subunit is responsible for the synthesis of L-tryptophan from indole and L-serine. The chain is Tryptophan synthase beta chain from Haemophilus influenzae (strain 86-028NP).